Reading from the N-terminus, the 287-residue chain is uncharacterized protein (287 aa).

The THUMP domain maps to 133–239 (CEVGKTKKMT…KNIIGISIVQ (107 aa)). The interval 257 to 287 (ENTKSIPNDSKLDNFDRDKNQIINDKAEHAE) is disordered. Positions 266–287 (SKLDNFDRDKNQIINDKAEHAE) are enriched in basic and acidic residues.

This is an uncharacterized protein from Schizosaccharomyces pombe (strain 972 / ATCC 24843) (Fission yeast).